Reading from the N-terminus, the 159-residue chain is Dihydrofolate reductase (159 aa).

Residues 1-158 (MISLIAALAV…HSYCFEILER (158 aa)) enclose the DHFR domain. Residue Ile-5 participates in substrate binding. Residues Ala-7 and 13 to 19 (VIGMENA) contribute to the NADP(+) site. Residue Asp-27 participates in substrate binding. Residue 45–46 (HT) participates in NADP(+) binding. The substrate site is built by Arg-52 and Arg-57. Residues 63–64 (SS), Lys-76, and 95–102 (GGGRVYEQ) each bind NADP(+). A substrate-binding site is contributed by Thr-113.

This sequence belongs to the dihydrofolate reductase family.

The catalysed reaction is (6S)-5,6,7,8-tetrahydrofolate + NADP(+) = 7,8-dihydrofolate + NADPH + H(+). It functions in the pathway cofactor biosynthesis; tetrahydrofolate biosynthesis; 5,6,7,8-tetrahydrofolate from 7,8-dihydrofolate: step 1/1. In terms of biological role, key enzyme in folate metabolism. Catalyzes an essential reaction for de novo glycine and purine synthesis, and for DNA precursor synthesis. This is Dihydrofolate reductase (folA) from Escherichia coli O6:H1 (strain CFT073 / ATCC 700928 / UPEC).